A 295-amino-acid polypeptide reads, in one-letter code: Protease HtpX (295 aa).

The next 2 membrane-spanning stretches (helical) occupy residues 4 to 24 and 41 to 61; these read ILLF…TLSL and GQLL…SLFI. Histidine 147 provides a ligand contact to Zn(2+). Residue glutamate 148 is part of the active site. Histidine 151 serves as a coordination point for Zn(2+). Helical transmembrane passes span 158–178 and 198–218; these read VTMA…ARII and FVAT…IVMW. Residue glutamate 224 coordinates Zn(2+).

It belongs to the peptidase M48B family. Zn(2+) is required as a cofactor.

It localises to the cell inner membrane. The polypeptide is Protease HtpX (Pseudomonas entomophila (strain L48)).